The sequence spans 98 residues: Plastocyanin (98 aa).

The Plastocyanin-like domain maps to 1–98; sequence AQIVKLGGDD…AGMKMTITVQ (98 aa). Residues His38, Cys83, His86, and Met91 each coordinate Cu cation.

Belongs to the plastocyanin family. Cu(2+) is required as a cofactor.

The protein resides in the plastid. It localises to the chloroplast thylakoid membrane. In terms of biological role, participates in electron transfer between P700 and the cytochrome b6-f complex in photosystem I. The protein is Plastocyanin (PETE) of Ulva arasakii (Sea lettuce).